A 156-amino-acid chain; its full sequence is Transcription elongation factor GreA (156 aa).

Residues 1 to 32 (MKKVRLTREGYEKLKKELEDLKRKFMYEISER) adopt a coiled-coil conformation.

This sequence belongs to the GreA/GreB family.

Necessary for efficient RNA polymerase transcription elongation past template-encoded arresting sites. The arresting sites in DNA have the property of trapping a certain fraction of elongating RNA polymerases that pass through, resulting in locked ternary complexes. Cleavage of the nascent transcript by cleavage factors such as GreA or GreB allows the resumption of elongation from the new 3'terminus. GreA releases sequences of 2 to 3 nucleotides. This is Transcription elongation factor GreA from Thermotoga maritima (strain ATCC 43589 / DSM 3109 / JCM 10099 / NBRC 100826 / MSB8).